Here is a 487-residue protein sequence, read N- to C-terminus: Malonate-semialdehyde dehydrogenase 3 (487 aa).

Positions 154, 178, 181, 182, and 231 each coordinate NAD(+). Residue Cys-286 is the Nucleophile of the active site. Residue Glu-386 participates in NAD(+) binding.

It belongs to the aldehyde dehydrogenase family. IolA subfamily. Homotetramer.

The catalysed reaction is 3-oxopropanoate + NAD(+) + CoA + H2O = hydrogencarbonate + acetyl-CoA + NADH + H(+). It carries out the reaction 2-methyl-3-oxopropanoate + NAD(+) + CoA + H2O = propanoyl-CoA + hydrogencarbonate + NADH + H(+). The protein operates within polyol metabolism; myo-inositol degradation into acetyl-CoA; acetyl-CoA from myo-inositol: step 7/7. Functionally, catalyzes the oxidation of malonate semialdehyde (MSA) and methylmalonate semialdehyde (MMSA) into acetyl-CoA and propanoyl-CoA, respectively. Is involved in a myo-inositol catabolic pathway. Bicarbonate, and not CO2, is the end-product of the enzymatic reaction. The polypeptide is Malonate-semialdehyde dehydrogenase 3 (Bacillus cereus (strain ZK / E33L)).